The sequence spans 271 residues: Catechol O-methyltransferase (271 aa).

Topologically, residues 1-6 are cytoplasmic; sequence MPEAPP. The helical; Signal-anchor for type II membrane protein transmembrane segment at 7–26 threads the bilayer; sequence LLLAAVLLGLVLLVVLLLLL. Topologically, residues 27 to 271 are extracellular; that stretch reads RHWGWGLCLI…YKGPGSEAGP (245 aa). Residues valine 92, glutamate 114, serine 122, glutamate 140, isoleucine 141, 167–170, serine 169, and aspartate 191 contribute to the S-adenosyl-L-methionine site; that span reads GASQ. Aspartate 191 serves as a coordination point for Mg(2+). Position 194 (lysine 194) interacts with substrate. Residues aspartate 219 and asparagine 220 each contribute to the Mg(2+) site. Substrate contacts are provided by asparagine 220 and glutamate 249. At serine 267 the chain carries Phosphoserine.

The protein belongs to the class I-like SAM-binding methyltransferase superfamily. Cation-dependent O-methyltransferase family. Mg(2+) serves as cofactor. The N-terminus is blocked. As to expression, brain, liver, placenta, lymphocytes and erythrocytes.

It is found in the cytoplasm. Its subcellular location is the cell membrane. It carries out the reaction a catechol + S-adenosyl-L-methionine = a guaiacol + S-adenosyl-L-homocysteine + H(+). The catalysed reaction is 2-hydroxyestrone + S-adenosyl-L-methionine = 2-hydroxy-3-methoxy-estrone + S-adenosyl-L-homocysteine + H(+). The enzyme catalyses 4-hydroxyestrone + S-adenosyl-L-methionine = 4-methoxyestrone + S-adenosyl-L-homocysteine + H(+). It catalyses the reaction 2-hydroxyestrone + S-adenosyl-L-methionine = 2-methoxyestrone + S-adenosyl-L-homocysteine + H(+). It carries out the reaction 4-hydroxy-17beta-estradiol + S-adenosyl-L-methionine = 4-methoxy-17beta-estradiol + S-adenosyl-L-homocysteine + H(+). The catalysed reaction is 2-hydroxy-17beta-estradiol + S-adenosyl-L-methionine = 2-hydroxy-3-methoxy-17beta-estradiol + S-adenosyl-L-homocysteine + H(+). The enzyme catalyses 2-hydroxy-17beta-estradiol + S-adenosyl-L-methionine = 2-methoxy-17beta-estradiol + S-adenosyl-L-homocysteine + H(+). In terms of biological role, catalyzes the O-methylation, and thereby the inactivation, of catecholamine neurotransmitters and catechol hormones. Also shortens the biological half-lives of certain neuroactive drugs, like L-DOPA, alpha-methyl DOPA and isoproterenol. This Homo sapiens (Human) protein is Catechol O-methyltransferase.